The primary structure comprises 167 residues: Putative pre-16S rRNA nuclease (167 aa).

The segment at 1–24 (MVLTQHRVPDRPGDPDQDPGRGRR) is disordered. A compositionally biased stretch (basic and acidic residues) spans 7 to 21 (RVPDRPGDPDQDPGR).

The protein belongs to the YqgF nuclease family.

Its subcellular location is the cytoplasm. In terms of biological role, could be a nuclease involved in processing of the 5'-end of pre-16S rRNA. In Mycolicibacterium paratuberculosis (strain ATCC BAA-968 / K-10) (Mycobacterium paratuberculosis), this protein is Putative pre-16S rRNA nuclease.